We begin with the raw amino-acid sequence, 839 residues long: Taste receptor type 1 member 2 (839 aa).

The N-terminal stretch at methionine 1 to alanine 19 is a signal peptide. The Extracellular segment spans residues glutamate 20–threonine 566. N-linked (GlcNAc...) asparagine glycosylation is found at asparagine 84, asparagine 248, asparagine 292, asparagine 312, asparagine 368, asparagine 407, asparagine 428, asparagine 487, and asparagine 527. A helical transmembrane segment spans residues isoleucine 567–phenylalanine 587. At tryptophan 588–proline 602 the chain is on the cytoplasmic side. The chain crosses the membrane as a helical span at residues methionine 603–glycine 623. Topologically, residues proline 624–alanine 635 are extracellular. The helical transmembrane segment at leucine 636–valine 656 threads the bilayer. Over cysteine 657–serine 681 the chain is Cytoplasmic. Residues methionine 682–leucine 702 traverse the membrane as a helical segment. The Extracellular segment spans residues serine 703–serine 727. Residues leucine 728–methionine 748 traverse the membrane as a helical segment. Residues glycine 749–lysine 760 lie on the Cytoplasmic side of the membrane. Residues phenylalanine 761–serine 781 form a helical membrane-spanning segment. At alanine 782–serine 784 the chain is on the extracellular side. Residues glycine 785–leucine 805 form a helical membrane-spanning segment. The Cytoplasmic portion of the chain corresponds to glycine 806–aspartate 839.

It belongs to the G-protein coupled receptor 3 family. TAS1R subfamily. In terms of assembly, forms heterodimers with TAS1R3.

Its subcellular location is the cell membrane. Functionally, putative taste receptor. TAS1R2/TAS1R3 recognizes diverse natural and synthetic sweeteners. The sequence is that of Taste receptor type 1 member 2 (TAS1R2) from Gorilla gorilla gorilla (Western lowland gorilla).